A 172-amino-acid chain; its full sequence is Peptidyl-prolyl cis-trans isomerase (172 aa).

Residues 7–170 form the PPIase cyclophilin-type domain; it reads FFDMTVGGAP…KVVKVADCGQ (164 aa).

This sequence belongs to the cyclophilin-type PPIase family.

Its subcellular location is the cytoplasm. It carries out the reaction [protein]-peptidylproline (omega=180) = [protein]-peptidylproline (omega=0). Binds cyclosporin A (CsA). CsA mediates some of its effects via an inhibitory action on PPIase. In terms of biological role, PPIases accelerate the folding of proteins. It catalyzes the cis-trans isomerization of proline imidic peptide bonds in oligopeptides. The polypeptide is Peptidyl-prolyl cis-trans isomerase (CYP) (Zea mays (Maize)).